The primary structure comprises 230 residues: Ribonuclease 3 (230 aa).

Residues 19-134 form the RNase III domain; it reads ELLTIALTHR…LLGAIYLEHG (116 aa). E44 is a Mg(2+) binding site. Residue D48 is part of the active site. Mg(2+)-binding residues include D120 and E123. In terms of domain architecture, DRBM spans 161–229; it reads DWKSSLQELT…AASAYKTLDE (69 aa).

This sequence belongs to the ribonuclease III family. As to quaternary structure, homodimer. Mg(2+) is required as a cofactor.

It localises to the cytoplasm. The catalysed reaction is Endonucleolytic cleavage to 5'-phosphomonoester.. In terms of biological role, digests double-stranded RNA. Involved in the processing of primary rRNA transcript to yield the immediate precursors to the all rRNAs (23S, 16S and 5S). Processes some mRNAs, and tRNAs when they are encoded in the rRNA operon. Processes pre-crRNA and tracrRNA of type II CRISPR loci if present in the organism. The protein is Ribonuclease 3 (rnc) of Mycolicibacterium smegmatis (strain ATCC 700084 / mc(2)155) (Mycobacterium smegmatis).